Consider the following 469-residue polypeptide: 3-isopropylmalate dehydratase large subunit (469 aa).

Cys350, Cys410, and Cys413 together coordinate [4Fe-4S] cluster.

The protein belongs to the aconitase/IPM isomerase family. LeuC type 1 subfamily. In terms of assembly, heterodimer of LeuC and LeuD. It depends on [4Fe-4S] cluster as a cofactor.

The catalysed reaction is (2R,3S)-3-isopropylmalate = (2S)-2-isopropylmalate. The protein operates within amino-acid biosynthesis; L-leucine biosynthesis; L-leucine from 3-methyl-2-oxobutanoate: step 2/4. In terms of biological role, catalyzes the isomerization between 2-isopropylmalate and 3-isopropylmalate, via the formation of 2-isopropylmaleate. This Brucella abortus (strain S19) protein is 3-isopropylmalate dehydratase large subunit.